The chain runs to 502 residues: Glycerol kinase (502 aa).

ADP is bound at residue Thr-14. Residues Thr-14, Thr-15, and Ser-16 each coordinate ATP. Thr-14 serves as a coordination point for sn-glycerol 3-phosphate. Residue Arg-18 coordinates ADP. Sn-glycerol 3-phosphate-binding residues include Arg-84, Glu-85, Tyr-136, and Asp-246. Glycerol contacts are provided by Arg-84, Glu-85, Tyr-136, Asp-246, and Gln-247. 2 residues coordinate ADP: Thr-268 and Gly-311. Positions 268, 311, 315, and 412 each coordinate ATP. The ADP site is built by Gly-412 and Asn-416.

The protein belongs to the FGGY kinase family. In terms of assembly, homotetramer and homodimer (in equilibrium). Heterodimer with EIIA-Glc. Binds 1 zinc ion per glycerol kinase EIIA-Glc dimer. The zinc ion is important for dimerization.

The enzyme catalyses glycerol + ATP = sn-glycerol 3-phosphate + ADP + H(+). It participates in polyol metabolism; glycerol degradation via glycerol kinase pathway; sn-glycerol 3-phosphate from glycerol: step 1/1. With respect to regulation, activity of this regulatory enzyme is affected by several metabolites. Allosterically and non-competitively inhibited by fructose 1,6-bisphosphate (FBP) and unphosphorylated phosphocarrier protein EIIA-Glc (III-Glc), an integral component of the bacterial phosphotransferase (PTS) system. Functionally, key enzyme in the regulation of glycerol uptake and metabolism. Catalyzes the phosphorylation of glycerol to yield sn-glycerol 3-phosphate. The sequence is that of Glycerol kinase from Escherichia coli O8 (strain IAI1).